Reading from the N-terminus, the 240-residue chain is Ribosomal RNA small subunit methyltransferase J (240 aa).

Residues 93 to 94 and D162 contribute to the S-adenosyl-L-methionine site; that span reads RD.

Belongs to the methyltransferase superfamily. RsmJ family.

Its subcellular location is the cytoplasm. The enzyme catalyses guanosine(1516) in 16S rRNA + S-adenosyl-L-methionine = N(2)-methylguanosine(1516) in 16S rRNA + S-adenosyl-L-homocysteine + H(+). Specifically methylates the guanosine in position 1516 of 16S rRNA. The sequence is that of Ribosomal RNA small subunit methyltransferase J from Francisella philomiragia subsp. philomiragia (strain ATCC 25017 / CCUG 19701 / FSC 153 / O#319-036).